A 1372-amino-acid chain; its full sequence is DNA-directed RNA polymerase subunit beta (1372 aa).

It belongs to the RNA polymerase beta chain family. In terms of assembly, the RNAP catalytic core consists of 2 alpha, 1 beta, 1 beta' and 1 omega subunit. When a sigma factor is associated with the core the holoenzyme is formed, which can initiate transcription.

It catalyses the reaction RNA(n) + a ribonucleoside 5'-triphosphate = RNA(n+1) + diphosphate. Its function is as follows. DNA-dependent RNA polymerase catalyzes the transcription of DNA into RNA using the four ribonucleoside triphosphates as substrates. This chain is DNA-directed RNA polymerase subunit beta, found in Psychrobacter sp. (strain PRwf-1).